The primary structure comprises 271 residues: Tryptophan synthase alpha chain (271 aa).

Catalysis depends on proton acceptor residues Glu49 and Asp60.

It belongs to the TrpA family. Tetramer of two alpha and two beta chains.

The catalysed reaction is (1S,2R)-1-C-(indol-3-yl)glycerol 3-phosphate + L-serine = D-glyceraldehyde 3-phosphate + L-tryptophan + H2O. Its pathway is amino-acid biosynthesis; L-tryptophan biosynthesis; L-tryptophan from chorismate: step 5/5. Functionally, the alpha subunit is responsible for the aldol cleavage of indoleglycerol phosphate to indole and glyceraldehyde 3-phosphate. This is Tryptophan synthase alpha chain from Burkholderia ambifaria (strain MC40-6).